The following is a 144-amino-acid chain: Large ribosomal subunit protein uL16 (144 aa).

It belongs to the universal ribosomal protein uL16 family. Part of the 50S ribosomal subunit.

Functionally, binds 23S rRNA and is also seen to make contacts with the A and possibly P site tRNAs. This is Large ribosomal subunit protein uL16 from Pediococcus pentosaceus (strain ATCC 25745 / CCUG 21536 / LMG 10740 / 183-1w).